The following is a 159-amino-acid chain: Ecotin (159 aa).

The signal sequence occupies residues 1–22 (MRPTPMTAILALSLAAAAPAMA). An intrachain disulfide couples C68 to C105.

The protein belongs to the protease inhibitor I11 (ecotin) family. As to quaternary structure, homodimer.

The protein resides in the periplasm. In terms of biological role, general inhibitor of family S1 serine proteases. The polypeptide is Ecotin (Pseudomonas putida (strain ATCC 700007 / DSM 6899 / JCM 31910 / BCRC 17059 / LMG 24140 / F1)).